Reading from the N-terminus, the 253-residue chain is Tryptophan synthase alpha chain (253 aa).

Residues Glu47 and Asp58 each act as proton acceptor in the active site.

The protein belongs to the TrpA family. Tetramer of two alpha and two beta chains.

The enzyme catalyses (1S,2R)-1-C-(indol-3-yl)glycerol 3-phosphate + L-serine = D-glyceraldehyde 3-phosphate + L-tryptophan + H2O. Its pathway is amino-acid biosynthesis; L-tryptophan biosynthesis; L-tryptophan from chorismate: step 5/5. Functionally, the alpha subunit is responsible for the aldol cleavage of indoleglycerol phosphate to indole and glyceraldehyde 3-phosphate. In Desulforapulum autotrophicum (strain ATCC 43914 / DSM 3382 / VKM B-1955 / HRM2) (Desulfobacterium autotrophicum), this protein is Tryptophan synthase alpha chain.